A 128-amino-acid chain; its full sequence is Aspartate 1-decarboxylase (128 aa).

Serine 25 (schiff-base intermediate with substrate; via pyruvic acid) is an active-site residue. Residue serine 25 is modified to Pyruvic acid (Ser). Threonine 57 is a binding site for substrate. Residue tyrosine 58 is the Proton donor of the active site. 73–75 (GSA) contributes to the substrate binding site.

It belongs to the PanD family. In terms of assembly, heterooctamer of four alpha and four beta subunits. Pyruvate serves as cofactor. In terms of processing, is synthesized initially as an inactive proenzyme, which is activated by self-cleavage at a specific serine bond to produce a beta-subunit with a hydroxyl group at its C-terminus and an alpha-subunit with a pyruvoyl group at its N-terminus.

It localises to the cytoplasm. It carries out the reaction L-aspartate + H(+) = beta-alanine + CO2. It participates in cofactor biosynthesis; (R)-pantothenate biosynthesis; beta-alanine from L-aspartate: step 1/1. Catalyzes the pyruvoyl-dependent decarboxylation of aspartate to produce beta-alanine. In Burkholderia lata (strain ATCC 17760 / DSM 23089 / LMG 22485 / NCIMB 9086 / R18194 / 383), this protein is Aspartate 1-decarboxylase.